A 396-amino-acid polypeptide reads, in one-letter code: MRAAYACDPMATRGRAVVEEESAHRSPFQRDRDRIIHSSAFRRLKHKTQVFVEHEGDYFRTRLTHSLEVAQVARTMARALGLDEDLTETVALAHDLGHPPFGHTGEDALSALMAPYGGYDHNAQALRIVTHLERHYAEFDGLNLTWETLEGIAKHNGPVAAPLPWALEASCADINLELSTHASAEAQVAALADDIAYNHHDLHDGLRAELFSTDELAGLPILKGCFAAVDQRYPGLNYYRRRHEALRRFFGVLVEDVLANARAALAEINPQSAMDIRNAGRPIIRFSNGLFADLQVIRTFLFKRMYRAPSVVEMRTQVTQVVEDLFPFFLETPSELPRQWRKDVEDVAGDATQLARIVSDYISGMTDRFALQCHQRLIGGAQDGTVTGPSTLNFGA.

The HD domain occupies 62–198 (RLTHSLEVAQ…AALADDIAYN (137 aa)).

This sequence belongs to the dGTPase family. Type 2 subfamily.

The sequence is that of Deoxyguanosinetriphosphate triphosphohydrolase-like protein from Jannaschia sp. (strain CCS1).